We begin with the raw amino-acid sequence, 575 residues long: U3 small nucleolar RNA-associated protein 9 (575 aa).

Composition is skewed to basic and acidic residues over residues 340 to 355 (NEKNNADEADQKKLEE) and 364 to 375 (VQHEKKETETKI). Residues 340–375 (NEKNNADEADQKKLEEKEEEAQPEVQHEKKETETKI) are disordered. Ser-547 and Ser-564 each carry phosphoserine.

In terms of assembly, interacts with snoRNA U3. Interacts with MPP10. Component of the ribosomal small subunit (SSU) processome composed of at least 40 protein subunits and snoRNA U3. In the absence of snoRNA3, forms a complex with other t-UTPs. This complex can associate with pre-18S ribosomal RNAs.

It localises to the nucleus. The protein resides in the nucleolus. Its function is as follows. Involved in nucleolar processing of pre-18S ribosomal RNA. Required for optimal pre-ribosomal RNA transcription by RNA polymerase I together with a subset of U3 proteins required for transcription (t-UTPs). This Saccharomyces cerevisiae (strain ATCC 204508 / S288c) (Baker's yeast) protein is U3 small nucleolar RNA-associated protein 9 (UTP9).